The following is a 196-amino-acid chain: Holliday junction branch migration complex subunit RuvA (196 aa).

The tract at residues 1-63 (MYEYFKGIIS…EDAELLYGFA (63 aa)) is domain I. Positions 64–142 (TEEEKQLFLS…AADGLAESKA (79 aa)) are domain II. The flexible linker stretch occupies residues 143–146 (PVQT). A domain III region spans residues 147-196 (VDNQELEEAMEAMLALGYKATELKKIKKFFEGTTDTAENYIKSALKMLVK).

The protein belongs to the RuvA family. In terms of assembly, homotetramer. Forms an RuvA(8)-RuvB(12)-Holliday junction (HJ) complex. HJ DNA is sandwiched between 2 RuvA tetramers; dsDNA enters through RuvA and exits via RuvB. An RuvB hexamer assembles on each DNA strand where it exits the tetramer. Each RuvB hexamer is contacted by two RuvA subunits (via domain III) on 2 adjacent RuvB subunits; this complex drives branch migration. In the full resolvosome a probable DNA-RuvA(4)-RuvB(12)-RuvC(2) complex forms which resolves the HJ.

It localises to the cytoplasm. Its function is as follows. The RuvA-RuvB-RuvC complex processes Holliday junction (HJ) DNA during genetic recombination and DNA repair, while the RuvA-RuvB complex plays an important role in the rescue of blocked DNA replication forks via replication fork reversal (RFR). RuvA specifically binds to HJ cruciform DNA, conferring on it an open structure. The RuvB hexamer acts as an ATP-dependent pump, pulling dsDNA into and through the RuvAB complex. HJ branch migration allows RuvC to scan DNA until it finds its consensus sequence, where it cleaves and resolves the cruciform DNA. The protein is Holliday junction branch migration complex subunit RuvA of Streptococcus gordonii (strain Challis / ATCC 35105 / BCRC 15272 / CH1 / DL1 / V288).